Consider the following 620-residue polypeptide: Glutathione-regulated potassium-efflux system protein KefC (620 aa).

At 1-3 the chain is on the periplasmic side; that stretch reads MDS. The helical transmembrane segment at 4 to 24 threads the bilayer; it reads HTLIQALIYLGSAALIVPIAV. Residue arginine 25 is a topological domain, cytoplasmic. Residues 26–46 form a helical membrane-spanning segment; sequence LGLGSVLGYLIAGCIIGPWGL. Topologically, residues 47–53 are periplasmic; that stretch reads RLVTDAE. The helical transmembrane segment at 54-74 threads the bilayer; it reads SILHFAEIGVVLMLFIIGLEL. Residues 75 to 89 are Cytoplasmic-facing; that stretch reads DPQRLWKLRAAVFGG. A helical membrane pass occupies residues 90-110; sequence GALQMVICGGLLGLFCMLLGL. Topologically, residues 111–113 are periplasmic; that stretch reads RWQ. A helical transmembrane segment spans residues 114–134; it reads VAELIGMTLALSSTAIAMQAM. Residues 135-148 lie on the Cytoplasmic side of the membrane; sequence NERNLMVTQMGRSA. The chain crosses the membrane as a helical span at residues 149-169; the sequence is FAVLLFQDIAAIPLVAMIPLL. At 170 to 177 the chain is on the periplasmic side; it reads AASSASTT. Residues 178–198 traverse the membrane as a helical segment; sequence MGAFVLSALKVAGALALVVLL. Topologically, residues 199–213 are cytoplasmic; it reads GRYVTRPALRFVARS. The chain crosses the membrane as a helical span at residues 214-233; sequence GLREVFSAVALFLVFGFGLL. Residues 234 to 236 lie on the Periplasmic side of the membrane; the sequence is LEE. The helical transmembrane segment at 237–254 threads the bilayer; it reads VGLSMAMGAFLAGVLLAS. Over 255 to 269 the chain is Cytoplasmic; it reads SEYRHALESDIEPFK. The helical transmembrane segment at 270 to 290 threads the bilayer; the sequence is GLLLGLFFIGVGMSIDFGTLL. The Periplasmic segment spans residues 291–293; the sequence is ENP. A helical transmembrane segment spans residues 294-314; that stretch reads LRIVILLLGFLIIKIAMLWLI. At 315 to 326 the chain is on the cytoplasmic side; the sequence is ARPLQVPNKQRR. A helical membrane pass occupies residues 327-347; it reads WFAVLLGQGSEFAFVVFGAAQ. The Periplasmic segment spans residues 348-358; sequence MANVLEPEWAK. The chain crosses the membrane as a helical span at residues 359 to 379; it reads SLTLAVALSMAATPILLVILN. Over 380–620 the chain is Cytoplasmic; sequence RLEQSSTEEA…ADEPETKPSS (241 aa). The 120-residue stretch at 399–518 folds into the RCK N-terminal domain; that stretch reads QPRVIIAGFG…AGVEKPERET (120 aa). The disordered stretch occupies residues 597–620; sequence GWQGTEEGKHTGNMADEPETKPSS.

This sequence belongs to the monovalent cation:proton antiporter 2 (CPA2) transporter (TC 2.A.37) family. KefC subfamily. In terms of assembly, homodimer. Interacts with the regulatory subunit KefF.

The protein localises to the cell inner membrane. In terms of biological role, pore-forming subunit of a potassium efflux system that confers protection against electrophiles. Catalyzes K(+)/H(+) antiport. This is Glutathione-regulated potassium-efflux system protein KefC from Escherichia coli O6:H1 (strain CFT073 / ATCC 700928 / UPEC).